Reading from the N-terminus, the 89-residue chain is MARSLKKGPFVDHHLAKKVESAAGSKKPIKTWSRRSMILPEMVGITIAVHNGKNHIPVLVNENMVGHKLGEFAVTRTFKGHGGDKKSGR.

This sequence belongs to the universal ribosomal protein uS19 family.

Functionally, protein S19 forms a complex with S13 that binds strongly to the 16S ribosomal RNA. The chain is Small ribosomal subunit protein uS19 from Xanthomonas axonopodis pv. citri (strain 306).